The chain runs to 901 residues: HTH-type transcriptional regulator MalT (901 aa).

39–46 contacts ATP; that stretch reads SPAGYGKT. An HTH luxR-type domain is found at 829 to 894; the sequence is ELIRTSPLTQ…AAVQHAQKLL (66 aa). Positions 853–872 form a DNA-binding region, H-T-H motif; that stretch reads NEQIAGELEVAATTIKTHIR.

Belongs to the MalT family. As to quaternary structure, monomer in solution. Oligomerizes to an active state in the presence of the positive effectors ATP and maltotriose.

With respect to regulation, activated by ATP and maltotriose, which are both required for DNA binding. Its function is as follows. Positively regulates the transcription of the maltose regulon whose gene products are responsible for uptake and catabolism of malto-oligosaccharides. Specifically binds to the promoter region of its target genes, recognizing a short DNA motif called the MalT box. The sequence is that of HTH-type transcriptional regulator MalT from Escherichia coli O139:H28 (strain E24377A / ETEC).